An 80-amino-acid chain; its full sequence is Diphthamide biosynthesis protein 3 (80 aa).

One can recognise a DPH-type MB domain in the interval 4-60 (FHDEVEIEDFEFDEEKDVYHYPCPCGDRFEIPREMLEMGEDVAQCPSCSLLIRVIYD). Fe cation-binding residues include Cys26, Cys28, Cys48, and Cys51.

It belongs to the DPH3 family. Component of the 2-(3-amino-3-carboxypropyl)histidine synthase complex composed of dph-1, dph-2, dph-3 and a NADH-dependent reductase. The cofactor is Fe(2+).

It catalyses the reaction [3Fe-4S](1+)-[protein] + Fe(2+)-[Dph3] = [3Fe-4S](0)-[protein] + Fe(3+)-[Dph3]. It carries out the reaction 2 [3Fe-4S](0)-[protein] + 2 Fe(2+)-[Dph3] + NADH = 2 [4Fe-4S](1+)-[protein] + 2 [Dph3] + NAD(+) + H(+). The protein operates within protein modification; peptidyl-diphthamide biosynthesis. Functionally, required for the first step of diphthamide biosynthesis, a post-translational modification of histidine which occurs in elongation factor 2. Dph-1 and dph-2 transfer a 3-amino-3-carboxypropyl (ACP) group from S-adenosyl-L-methionine (SAM) to a histidine residue, the reaction is assisted by a reduction system comprising dph-3 and a NADH-dependent reductase. Acts as an electron donor to reduce the Fe-S cluster in dph1-dph2 keeping the [4Fe-4S] clusters in the active and reduced state. Restores iron to dph-1-dph-2 iron-sulfur clusters which have degraded from [4Fe-4S] to [3Fe-4S] by donating an iron atom to reform [4Fe-4S] clusters, in a manner dependent on the presence of elongation factor 2 and SAM. Associates with the elongator complex and is required for tRNA Wobble base modifications mediated by the elongator complex. The elongator complex is required for multiple tRNA modifications, including mcm5U (5-methoxycarbonylmethyl uridine), mcm5s 2U (5-methoxycarbonylmethyl-2-thiouridine), and ncm5U (5-carbamoylmethyl uridine). This Caenorhabditis elegans protein is Diphthamide biosynthesis protein 3.